Consider the following 241-residue polypeptide: Uridylate kinase (241 aa).

15 to 18 (KLSG) serves as a coordination point for ATP. The tract at residues 23–28 (GTEGFG) is involved in allosteric activation by GTP. Residue Gly57 participates in UMP binding. The ATP site is built by Gly58 and Arg62. Residues Asp77 and 138-145 (TGNPFFTT) contribute to the UMP site. The ATP site is built by Thr165, Phe171, and Asp174.

It belongs to the UMP kinase family. In terms of assembly, homohexamer.

The protein resides in the cytoplasm. The catalysed reaction is UMP + ATP = UDP + ADP. It participates in pyrimidine metabolism; CTP biosynthesis via de novo pathway; UDP from UMP (UMPK route): step 1/1. Allosterically activated by GTP. Inhibited by UTP. Functionally, catalyzes the reversible phosphorylation of UMP to UDP. This chain is Uridylate kinase, found in Salmonella choleraesuis (strain SC-B67).